The following is a 400-amino-acid chain: Putative transposase for insertion sequence element IS5376 (400 aa).

An HTH IS21-type domain is found at 5–67; that stretch reads GEFFMIKEMY…PFKPYLQKRM (63 aa). The segment at residues 20–39 is a DNA-binding region (H-T-H motif); sequence ISDIARELGIDRKTVRKYIH. The tract at residues 35 to 55 is disordered; sequence RKYIHSPNPPSKSKRKQRKSK. The Integrase catalytic domain maps to 113 to 287; sequence YETLPGEQMQ…SPQERWAEES (175 aa).

The protein belongs to the transposase IS21/IS408/IS1162 family.

In terms of biological role, involved in the transposition of the insertion sequence. The polypeptide is Putative transposase for insertion sequence element IS5376 (Geobacillus stearothermophilus (Bacillus stearothermophilus)).